Reading from the N-terminus, the 347-residue chain is Galactoside alpha-(1,2)-fucosyltransferase 2 (347 aa).

Residues 1-5 (MASAQ) are Cytoplasmic-facing. A helical; Signal-anchor for type II membrane protein membrane pass occupies residues 6 to 26 (VPFSFPLAHFLIFVFVTSTII). The Lumenal portion of the chain corresponds to 27-347 (HLQQRIVKLQ…PADLSPLLKH (321 aa)). N-linked (GlcNAc...) asparagine glycosylation is found at N192, N258, N286, and N312.

It belongs to the glycosyltransferase 11 family. As to expression, expressed in stomach, colon, ovary and uterus, specifically in luminal uterine epithelium. Expressed in various tissues including heart, liver, kidney, testis, epididymis, small intestine,and cecum. Expressed in duodenum, jejunum and ileum.

The protein localises to the golgi apparatus. The protein resides in the golgi stack membrane. It catalyses the reaction a beta-D-galactosyl-(1-&gt;3)-N-acetyl-beta-D-glucosaminyl derivative + GDP-beta-L-fucose = an alpha-L-Fuc-(1-&gt;2)-beta-D-Gal-(1-&gt;3)-beta-D-GlcNAc derivative + GDP + H(+). The catalysed reaction is a beta-D-galactosyl-(1-&gt;4)-N-acetyl-beta-D-glucosaminyl derivative + GDP-beta-L-fucose = an alpha-L-Fuc-(1-&gt;2)-beta-D-Gal-(1-&gt;4)-beta-D-GlcNAc derivative + GDP + H(+). It carries out the reaction a neolactoside nLc4Cer + GDP-beta-L-fucose = a neolactoside IV(2)-alpha-Fuc-nLc4Cer + GDP + H(+). The enzyme catalyses a neolactoside nLc4Cer(d18:1(4E)) + GDP-beta-L-fucose = a neolactoside IV(2)-alpha-Fuc-nLc4Cer(d18:1(4E)) + GDP + H(+). It catalyses the reaction a ganglioside GM1 + GDP-beta-L-fucose = a ganglioside Fuc-GM1 + GDP + H(+). The catalysed reaction is a ganglioside GA1 + GDP-beta-L-fucose = a ganglioside Fuc-GA1 + GDP + H(+). It carries out the reaction Lc4Cer + GDP-beta-L-fucose = alpha-L-fucosyl-(1-&gt;2)-beta-D-galactosyl-(1-&gt;3)-N-acetyl-beta-D-glucosaminyl-(1-&gt;3)-beta-D-galactosyl-(1-&gt;4)-beta-D-glucosyl-(1&lt;-&gt;1')-ceramide + GDP + H(+). The enzyme catalyses a beta-D-Gal-(1-&gt;3)-beta-D-GlcNAc-(1-&gt;3)-beta-D-Gal-(1-&gt;4)-beta-D-Glc-(1&lt;-&gt;1')-Cer(d18:1(4E)) + GDP-beta-L-fucose = alpha-L-fucosyl-(1-&gt;2)- beta-D-galactosyl-(1-&gt;3)-N-acetyl-beta-D-glucosaminyl-(1-&gt;3)-beta-D-galactosyl-(1-&gt;4)-beta-D-glucosyl-(1&lt;-&gt;1')-N-acylsphing-4-enine + GDP + H(+). It catalyses the reaction a ganglioside GD1b + GDP-beta-L-fucose = a ganglioside Fuc-GD1b + GDP + H(+). The catalysed reaction is a ganglioside GM1 (d18:1(4E)) + GDP-beta-L-fucose = a ganglioside Fuc-GM1 (d18:1(4E)) + GDP + H(+). It carries out the reaction a globoside GalGb4Cer (d18:1(4E)) + GDP-beta-L-fucose = a globoside Globo-H (d18:1(4E)) + GDP + H(+). The enzyme catalyses a lactoside III(4)-a-Fuc-Lc4Cer + GDP-beta-L-fucose = a lactoside IV(2),III(4)-a-[Fuc]2-Lc4Cer + GDP + H(+). It catalyses the reaction beta-D-galactosyl-(1-&gt;3)-N-acetyl-D-galactosamine + GDP-beta-L-fucose = alpha-L-fucosyl-(1-&gt;2)-beta-D-galactosyl-(1-&gt;3)-N-acetyl-D-galactosamine + GDP + H(+). It participates in protein modification; protein glycosylation. Its function is as follows. Catalyzes the transfer of L-fucose, from a guanosine diphosphate-beta-L-fucose, to the terminal galactose on both O- and N-linked glycans chains of cell surface glycoproteins and glycolipids and the resulting epitope regulates several processes such as cell-cell interaction including host-microbe interaction, cell surface expression and cell proliferation. Preferentially fucosylates gangliosides GA1 and GM1 in the antrum, cecum and colon and in the female reproductive organs. Fucosylated host glycoproteins or glycolipids mediate interaction with intestinal microbiota influencing its composition. Creates a soluble precursor oligosaccharide FuC-alpha ((1,2)Galbeta-) called the H antigen which is an essential substrate for the final step in the soluble ABO blood group antigen synthesis pathway. This is Galactoside alpha-(1,2)-fucosyltransferase 2 from Mus musculus (Mouse).